The sequence spans 248 residues: Probable transcriptional regulatory protein FTF0655 (248 aa).

It belongs to the TACO1 family.

The protein resides in the cytoplasm. This chain is Probable transcriptional regulatory protein FTF0655, found in Francisella tularensis subsp. tularensis (strain FSC 198).